A 204-amino-acid chain; its full sequence is High frequency lysogenization protein HflD homolog (204 aa).

It belongs to the HflD family.

It is found in the cytoplasm. The protein localises to the cell inner membrane. The protein is High frequency lysogenization protein HflD homolog of Xanthomonas euvesicatoria pv. vesicatoria (strain 85-10) (Xanthomonas campestris pv. vesicatoria).